Here is a 184-residue protein sequence, read N- to C-terminus: Tumor necrosis factor alpha-induced protein 8-like protein 2 (184 aa).

S3 carries the phosphoserine modification.

This sequence belongs to the TNFAIP8 family. TNFAIP8L2 subfamily. May interact with CASP8; however, such result is unclear since could not reproduce the interaction with CASP8. Interacts with RAC1. Post-translationally, phosphorylated by TAK1/MAP3K7; this phosphorylation triggers association with BTRC and subsequent ubiquitination and degradation. In terms of processing, ubiquitinated in a BTRC-depdent manner; leading to degradation mediated through the proteasome pathway. In terms of tissue distribution, expressed in thymus, spleen, lymph node and small intestine, but not in liver, heart, muscle, testis, spinal cord or brain. Up-regulated in the spinal cord of mice with experimental autoimmune encephalomyelitis. Constitutively expressed by macrophages, B and T-lymphocytes at various developmental stages.

It localises to the cytoplasm. The protein resides in the nucleus. The protein localises to the lysosome. In terms of biological role, acts as a negative regulator of innate and adaptive immunity by maintaining immune homeostasis. Plays a regulatory role in the Toll-like signaling pathway by determining the strength of LPS-induced signaling and gene expression. Inhibits TCR-mediated T-cell activation and negatively regulate T-cell function to prevent hyperresponsiveness. Also inhibits autolysosome formation via negatively modulating MTOR activation by interacting with RAC1 and promoting the disassociation of the RAC1-MTOR complex. Plays an essential role in NK-cell biology by acting as a checkpoint and displaying an expression pattern correlating with NK-cell maturation process and by negatively regulating NK-cell maturation and antitumor immunity. Mechanistically, suppresses IL-15-triggered mTOR activity in NK-cells. The sequence is that of Tumor necrosis factor alpha-induced protein 8-like protein 2 (Tnfaip8l2) from Mus musculus (Mouse).